The sequence spans 502 residues: Galactose/methyl galactoside import ATP-binding protein MglA (502 aa).

2 consecutive ABC transporter domains span residues 10–245 (LEMT…VGRE) and 255–502 (NEPK…SRYL). 42–49 (GENGAGKS) is a binding site for ATP.

It belongs to the ABC transporter superfamily. Galactose/methyl galactoside importer (TC 3.A.1.2.3) family. The complex is composed of one ATP-binding protein (MglA), two transmembrane proteins (MglC) and a solute-binding protein (MglB).

The protein localises to the cell inner membrane. It catalyses the reaction D-galactose(out) + ATP + H2O = D-galactose(in) + ADP + phosphate + H(+). The catalysed reaction is methyl beta-D-galactoside(out) + ATP + H2O = methyl beta-D-galactoside(in) + ADP + phosphate + H(+). Functionally, part of the ABC transporter complex MglABC involved in galactose/methyl galactoside import. Responsible for energy coupling to the transport system. In Vibrio cholerae serotype O1 (strain ATCC 39315 / El Tor Inaba N16961), this protein is Galactose/methyl galactoside import ATP-binding protein MglA.